We begin with the raw amino-acid sequence, 637 residues long: Tumor protein p73 (637 aa).

Positions 1-46 (MAQSTTTSPDGGTTFEHLWSSLEPDSTYFDLPQSSRGNNEVVGGTD) are transactivation. A Phosphothreonine modification is found at T27. A Phosphotyrosine; by SRC and HCK modification is found at Y28. Positions 78–104 (RAASASPYTPEHAASVPTHSPYAQPSS) are disordered. Residues 94–104 (PTHSPYAQPSS) are compositionally biased toward polar residues. Y99 is subject to Phosphotyrosine. Residues 131-310 (FQQSSTAKSA…DRKADEDHYR (180 aa)) are DNA-binding. Positions 194, 197, 258, and 262 each coordinate Zn(2+). Residues 301 to 311 (DRKADEDHYRE) show a composition bias toward basic and acidic residues. Residues 301-351 (DRKADEDHYREQQALNESSAKNGAASKRAFKQSPPAVPALGPGVKKRRHGD) form a disordered region. An interaction with HIPK2 region spans residues 345–380 (KKRRHGDEDTYYLQVRGRENFEILMKLKESLELMEL). An oligomerization region spans residues 345–386 (KKRRHGDEDTYYLQVRGRENFEILMKLKESLELMELVPQPLV). The short motif at 483 to 487 (PPPPY) is the PPxY motif element. Residues 485-551 (PPYHADPSLV…WRGLQDLKQG (67 aa)) enclose the SAM domain. A Glycyl lysine isopeptide (Lys-Gly) (interchain with G-Cter in SUMO); in isoform Alpha cross-link involves residue K628. K628 is covalently cross-linked (Glycyl lysine isopeptide (Lys-Gly) (interchain with G-Cter in SUMO2)).

This sequence belongs to the p53 family. As to quaternary structure, found in a complex with p53/TP53 and CABLES1. The C-terminal oligomerization domain binds to the ABL1 tyrosine kinase SH3 domain. Interacts with HECW2. Isoforms Alpha and Beta interact with HIPK2. Isoform Alpha interacts with RANBP9. Interacts with WWOX. Isoform Beta interacts homotypically and with p53, whereas isoform Alpha does not. Interacts (via SAM domain) with FBXO45 (via B30.2/SPRY domain). Interacts with YAP1 (phosphorylated form). Interacts with HCK (via SH3 domain); this inhibits TP73 activity and degradation. The cofactor is Zn(2+). Post-translationally, isoform Alpha (but not isoform Beta) is sumoylated on Lys-628, which potentiates proteasomal degradation but does not affect transcriptional activity. In terms of processing, polyubiquitinated by RCHY1/PIRH2; leading to its degradation by the proteasome.

The protein localises to the nucleus. It is found in the cytoplasm. Functionally, participates in the apoptotic response to DNA damage. May be a tumor suppressor protein. Is an activator of FOXJ1 expression, essential for the positive regulation of lung ciliated cell differentiation. This chain is Tumor protein p73 (TP73), found in Chlorocebus aethiops (Green monkey).